The primary structure comprises 353 residues: Chorismate synthase (353 aa).

Arg48 and Arg54 together coordinate NADP(+). FMN contacts are provided by residues 125 to 127 (RSS), 238 to 239 (NA), Gly278, 293 to 297 (KPTSS), and Arg319.

It belongs to the chorismate synthase family. In terms of assembly, homotetramer. It depends on FMNH2 as a cofactor.

The enzyme catalyses 5-O-(1-carboxyvinyl)-3-phosphoshikimate = chorismate + phosphate. Its pathway is metabolic intermediate biosynthesis; chorismate biosynthesis; chorismate from D-erythrose 4-phosphate and phosphoenolpyruvate: step 7/7. In terms of biological role, catalyzes the anti-1,4-elimination of the C-3 phosphate and the C-6 proR hydrogen from 5-enolpyruvylshikimate-3-phosphate (EPSP) to yield chorismate, which is the branch point compound that serves as the starting substrate for the three terminal pathways of aromatic amino acid biosynthesis. This reaction introduces a second double bond into the aromatic ring system. In Bordetella bronchiseptica (strain ATCC BAA-588 / NCTC 13252 / RB50) (Alcaligenes bronchisepticus), this protein is Chorismate synthase.